The following is a 128-amino-acid chain: uncharacterized protein (128 aa).

The protein resides in the mitochondrion. This is an uncharacterized protein from Schizosaccharomyces pombe (strain 972 / ATCC 24843) (Fission yeast).